Reading from the N-terminus, the 210-residue chain is Redox-sensing transcriptional repressor Rex (210 aa).

The H-T-H motif DNA-binding region spans 17–56 (KYHRYLGNLMRNDVDRISSKELSEKIGFTASQIRQDLNCF). NAD(+) is bound at residue 91–96 (GAGNIG).

It belongs to the transcriptional regulatory Rex family. In terms of assembly, homodimer.

The protein localises to the cytoplasm. In terms of biological role, modulates transcription in response to changes in cellular NADH/NAD(+) redox state. This chain is Redox-sensing transcriptional repressor Rex, found in Clostridium kluyveri (strain ATCC 8527 / DSM 555 / NBRC 12016 / NCIMB 10680 / K1).